The sequence spans 408 residues: Arginine biosynthesis bifunctional protein ArgJ (408 aa).

6 residues coordinate substrate: Thr158, Lys184, Thr195, Glu281, Asn403, and Thr408. Thr195 serves as the catalytic Nucleophile.

It belongs to the ArgJ family. As to quaternary structure, heterotetramer of two alpha and two beta chains.

The protein resides in the cytoplasm. It carries out the reaction N(2)-acetyl-L-ornithine + L-glutamate = N-acetyl-L-glutamate + L-ornithine. The enzyme catalyses L-glutamate + acetyl-CoA = N-acetyl-L-glutamate + CoA + H(+). The protein operates within amino-acid biosynthesis; L-arginine biosynthesis; L-ornithine and N-acetyl-L-glutamate from L-glutamate and N(2)-acetyl-L-ornithine (cyclic): step 1/1. Its pathway is amino-acid biosynthesis; L-arginine biosynthesis; N(2)-acetyl-L-ornithine from L-glutamate: step 1/4. Its function is as follows. Catalyzes two activities which are involved in the cyclic version of arginine biosynthesis: the synthesis of N-acetylglutamate from glutamate and acetyl-CoA as the acetyl donor, and of ornithine by transacetylation between N(2)-acetylornithine and glutamate. The sequence is that of Arginine biosynthesis bifunctional protein ArgJ from Bacillus cereus (strain ZK / E33L).